The following is a 196-amino-acid chain: Large ribosomal subunit protein uL10 (196 aa).

Residues 169–196 (KAAECPAEAPQPAAETPAEAPEAPADAE) are disordered. A compositionally biased stretch (low complexity) spans 172–196 (ECPAEAPQPAAETPAEAPEAPADAE).

The protein belongs to the universal ribosomal protein uL10 family. Part of the ribosomal stalk of the 50S ribosomal subunit. The N-terminus interacts with L11 and the large rRNA to form the base of the stalk. The C-terminus forms an elongated spine to which L12 dimers bind in a sequential fashion forming a multimeric L10(L12)X complex.

Functionally, forms part of the ribosomal stalk, playing a central role in the interaction of the ribosome with GTP-bound translation factors. The polypeptide is Large ribosomal subunit protein uL10 (Mycobacterium avium (strain 104)).